The primary structure comprises 182 residues: A-type ATP synthase subunit E (182 aa).

It belongs to the V-ATPase E subunit family. In terms of assembly, has multiple subunits with at least A(3), B(3), C, D, E, F, H, I and proteolipid K(x).

Its subcellular location is the cell membrane. Component of the A-type ATP synthase that produces ATP from ADP in the presence of a proton gradient across the membrane. The chain is A-type ATP synthase subunit E from Picrophilus torridus (strain ATCC 700027 / DSM 9790 / JCM 10055 / NBRC 100828 / KAW 2/3).